A 270-amino-acid chain; its full sequence is Formamidopyrimidine-DNA glycosylase (270 aa).

The active-site Schiff-base intermediate with DNA is the Pro-2. Catalysis depends on Glu-3, which acts as the Proton donor. Lys-58 functions as the Proton donor; for beta-elimination activity in the catalytic mechanism. 3 residues coordinate DNA: His-91, Arg-110, and Lys-151. Residues 236-270 form an FPG-type zinc finger; that stretch reads FVYGRGGQPCKVCGTTLREIKLGQRASVYCPKCQR. The active-site Proton donor; for delta-elimination activity is the Arg-260.

The protein belongs to the FPG family. Monomer. Zn(2+) is required as a cofactor.

It catalyses the reaction Hydrolysis of DNA containing ring-opened 7-methylguanine residues, releasing 2,6-diamino-4-hydroxy-5-(N-methyl)formamidopyrimidine.. The catalysed reaction is 2'-deoxyribonucleotide-(2'-deoxyribose 5'-phosphate)-2'-deoxyribonucleotide-DNA = a 3'-end 2'-deoxyribonucleotide-(2,3-dehydro-2,3-deoxyribose 5'-phosphate)-DNA + a 5'-end 5'-phospho-2'-deoxyribonucleoside-DNA + H(+). In terms of biological role, involved in base excision repair of DNA damaged by oxidation or by mutagenic agents. Acts as a DNA glycosylase that recognizes and removes damaged bases. Has a preference for oxidized purines, such as 7,8-dihydro-8-oxoguanine (8-oxoG). Has AP (apurinic/apyrimidinic) lyase activity and introduces nicks in the DNA strand. Cleaves the DNA backbone by beta-delta elimination to generate a single-strand break at the site of the removed base with both 3'- and 5'-phosphates. The chain is Formamidopyrimidine-DNA glycosylase from Pseudomonas savastanoi pv. phaseolicola (strain 1448A / Race 6) (Pseudomonas syringae pv. phaseolicola (strain 1448A / Race 6)).